We begin with the raw amino-acid sequence, 316 residues long: Coiled-coil domain-containing protein 42 (316 aa).

2 coiled-coil regions span residues 43–151 (RLLE…EYSI) and 182–236 (HHDL…SDVI).

The protein belongs to the CFAP73 family. Interacts with ODF1 and ODF2. Interacts with CCDC38. Interacts with CCDC146. Interacts with CFAP53.

The protein localises to the cytoplasm. Its subcellular location is the perinuclear region. It localises to the cytoskeleton. The protein resides in the cell projection. It is found in the cilium. The protein localises to the flagellum. Its subcellular location is the microtubule organizing center. It localises to the centrosome. In terms of biological role, essential for male fertility. Required for sperm development. This Bos taurus (Bovine) protein is Coiled-coil domain-containing protein 42.